The primary structure comprises 294 residues: Indole-3-glycerol phosphate synthase (294 aa).

Belongs to the TrpC family.

The catalysed reaction is 1-(2-carboxyphenylamino)-1-deoxy-D-ribulose 5-phosphate + H(+) = (1S,2R)-1-C-(indol-3-yl)glycerol 3-phosphate + CO2 + H2O. It participates in amino-acid biosynthesis; L-tryptophan biosynthesis; L-tryptophan from chorismate: step 4/5. This chain is Indole-3-glycerol phosphate synthase, found in Parasynechococcus marenigrum (strain WH8102).